The chain runs to 99 residues: Large ribosomal subunit protein uL23 (99 aa).

This sequence belongs to the universal ribosomal protein uL23 family. As to quaternary structure, part of the 50S ribosomal subunit. Contacts protein L29, and trigger factor when it is bound to the ribosome.

Functionally, one of the early assembly proteins it binds 23S rRNA. One of the proteins that surrounds the polypeptide exit tunnel on the outside of the ribosome. Forms the main docking site for trigger factor binding to the ribosome. In Streptococcus suis (strain 98HAH33), this protein is Large ribosomal subunit protein uL23.